Here is a 325-residue protein sequence, read N- to C-terminus: Capsid protein (325 aa).

Residues 30-89 (DLRTNPPPTEPPSRKSKLMSTSENKGKQPLHPPPTEGFPKPPPPPSSTPTTPTPPDQTKA) form a disordered region. The segment covering 59 to 84 (LHPPPTEGFPKPPPPPSSTPTTPTPP) has biased composition (pro residues).

Belongs to the potexviruses coat protein family.

It is found in the virion. Required for genome encapsidation. Forms ribonucleoprotein complexes along with TGB1 helicase and viral RNA. This Citrus (ICRSV) protein is Capsid protein.